We begin with the raw amino-acid sequence, 193 residues long: Ribosomal RNA large subunit methyltransferase E (193 aa).

Gly48, Phe50, Asp67, Asn85, and Asp107 together coordinate S-adenosyl-L-methionine. The active-site Proton acceptor is the Lys147.

The protein belongs to the class I-like SAM-binding methyltransferase superfamily. RNA methyltransferase RlmE family.

The protein resides in the cytoplasm. It carries out the reaction uridine(2552) in 23S rRNA + S-adenosyl-L-methionine = 2'-O-methyluridine(2552) in 23S rRNA + S-adenosyl-L-homocysteine + H(+). Specifically methylates the uridine in position 2552 of 23S rRNA at the 2'-O position of the ribose in the fully assembled 50S ribosomal subunit. The polypeptide is Ribosomal RNA large subunit methyltransferase E (Borrelia duttonii (strain Ly)).